The following is a 665-amino-acid chain: mRNA cleavage and polyadenylation factor CLP1 (665 aa).

Residues lysine 91 and 195 to 200 (SAGKTS) each bind ATP. 2 disordered regions span residues 218-283 (VKEG…SQAK) and 593-615 (PPPR…HDYE). 2 stretches are compositionally biased toward basic and acidic residues: residues 219-238 (KEGD…EIHP) and 598-614 (QSKD…HHDY).

The protein belongs to the Clp1 family. Clp1 subfamily. As to quaternary structure, component of a pre-mRNA cleavage factor complex. Interacts directly with PCF11.

It is found in the nucleus. In terms of biological role, required for endonucleolytic cleavage during polyadenylation-dependent pre-mRNA 3'-end formation. The protein is mRNA cleavage and polyadenylation factor CLP1 of Malassezia globosa (strain ATCC MYA-4612 / CBS 7966) (Dandruff-associated fungus).